Reading from the N-terminus, the 133-residue chain is Fatty acid-binding protein homolog 1 (133 aa).

Met1 carries the N-acetylmethionine modification. Residues Arg107 and 127 to 129 contribute to the hexadecanoate site; that span reads RTY.

Belongs to the calycin superfamily. Fatty-acid binding protein (FABP) family.

Functionally, has been implicated in the acquisition, storage, and transport of lipids, and may be important to the organism since it is incapable of synthesizing most of its lipids de novo. In Echinococcus granulosus (Hydatid tapeworm), this protein is Fatty acid-binding protein homolog 1 (FABP1).